We begin with the raw amino-acid sequence, 235 residues long: Phosphoribosylaminoimidazole-succinocarboxamide synthase (235 aa).

The protein belongs to the SAICAR synthetase family.

The enzyme catalyses 5-amino-1-(5-phospho-D-ribosyl)imidazole-4-carboxylate + L-aspartate + ATP = (2S)-2-[5-amino-1-(5-phospho-beta-D-ribosyl)imidazole-4-carboxamido]succinate + ADP + phosphate + 2 H(+). It participates in purine metabolism; IMP biosynthesis via de novo pathway; 5-amino-1-(5-phospho-D-ribosyl)imidazole-4-carboxamide from 5-amino-1-(5-phospho-D-ribosyl)imidazole-4-carboxylate: step 1/2. The protein is Phosphoribosylaminoimidazole-succinocarboxamide synthase of Chlorobaculum tepidum (strain ATCC 49652 / DSM 12025 / NBRC 103806 / TLS) (Chlorobium tepidum).